The chain runs to 107 residues: Thioredoxin (107 aa).

In terms of domain architecture, Thioredoxin spans 2-107 (SVSQVTDASF…LESTLNKYIS (106 aa)). Catalysis depends on nucleophile residues C31 and C34. C31 and C34 are oxidised to a cystine.

It belongs to the thioredoxin family.

The protein resides in the plastid. The protein localises to the chloroplast. Functionally, participates in various redox reactions through the reversible oxidation of its active center dithiol to a disulfide and catalyzes dithiol-disulfide exchange reactions. The protein is Thioredoxin (trxA) of Porphyra purpurea (Red seaweed).